Here is a 164-residue protein sequence, read N- to C-terminus: Ion-translocating oxidoreductase complex subunit G (164 aa).

T125 carries the FMN phosphoryl threonine modification.

The protein belongs to the RnfG family. The complex is composed of six subunits: RnfA, RnfB, RnfC, RnfD, RnfE and RnfG. Requires FMN as cofactor.

Its function is as follows. Part of a membrane-bound complex that couples electron transfer with translocation of ions across the membrane. This chain is Ion-translocating oxidoreductase complex subunit G, found in Buchnera aphidicola subsp. Acyrthosiphon pisum (strain APS) (Acyrthosiphon pisum symbiotic bacterium).